A 148-amino-acid chain; its full sequence is Large ribosomal subunit protein uL15 (148 aa).

The disordered stretch occupies residues 1-61 (MKINDLKPAP…GGQMPLQRRV (61 aa)).

It belongs to the universal ribosomal protein uL15 family. In terms of assembly, part of the 50S ribosomal subunit.

Binds to the 23S rRNA. This chain is Large ribosomal subunit protein uL15, found in Thermodesulfovibrio yellowstonii (strain ATCC 51303 / DSM 11347 / YP87).